Here is a 192-residue protein sequence, read N- to C-terminus: Cytochrome b-245 light chain (192 aa).

Residues 2 to 7 are Cytoplasmic-facing; the sequence is GQIEWA. Residues 8–30 traverse the membrane as a helical segment; that stretch reads MWANEQALASGLILITGGIVATA. Over 31–35 the chain is Extracellular; the sequence is GRFTQ. The chain crosses the membrane as a helical span at residues 36–53; sequence WYFGAYSIAAGVLICLLE. At 54–69 the chain is on the cytoplasmic side; it reads YPRGKRKKGSTMERCG. Residues 70-80 lie within the membrane without spanning it; that stretch reads QKYLTSVVKLF. Residues 81-86 are Cytoplasmic-facing; it reads GPLTRN. The helical transmembrane segment at 87 to 104 threads the bilayer; that stretch reads YYVRAALHFLLSVPAGFL. Position 105 (L105) is a topological domain, extracellular. The helical transmembrane segment at 106–126 threads the bilayer; the sequence is ATILGTVCLAIASVIYLLAAI. The Cytoplasmic portion of the chain corresponds to 127–192; sequence RGEQWTPIEP…NPMPVTDEVV (66 aa). The disordered stretch occupies residues 134-192; it reads IEPKPKERPQVGGTIKQPPTNPPPRPPAEVRKKPSEGEEEAASAGGPQVNPMPVTDEVV. T147 bears the Phosphothreonine mark. Residue K149 forms a Glycyl lysine isopeptide (Lys-Gly) (interchain with G-Cter in ubiquitin) linkage. S168 and S176 each carry phosphoserine.

This sequence belongs to the p22phox family. Component of the phagocyte NADPH oxidase core complex/cytochrome b558 complex, composed of CYBB (heavy chain (beta)) and CYBA (light chain (alpha)). Component of the phagocyte NADPH oxidase complex composed of an obligatory core heterodimer formed by the membrane proteins CYBA and CYBB and the cytosolic regulatory subunits NCF1/p47-phox, NCF2/p67-phox, NCF4/p40-phox and the small GTPase RAC1 or RAC2. Interacts with NCF1 (via SH3 domain). Interacts with SH3PXD2A. Interacts with DUOX1, DUOX2 and TPO. Interacts with NOX4; this interaction mediates superoxide generation. Interacts with calprotectin (S100A8/9). Interacts with GBP7. Interacts with NOXO1. Forms a heterodimer with NOX3 and is essential for activity and cell membrane localization of NOX3. Interacts with NOX1. Ubiquitinated at Lys-149 likely by RNF145. Post-translationally, phosphorylation at Thr-147 enhances NADPH oxidase activity by promoting NCF1/p47-phox binding. As to expression, the strongest level of expression is found in kidney, peritoneal neutrophils and peritoneal macrophages, and a lower level in spleen and small intestine. Very low level of expression can be noted in brain, liver, testis, and heart.

The protein resides in the cell membrane. Functionally, subunit of NADPH oxidase complexes that is required for the NADPH oxidase activity that generates, in various cell types, superoxide from molecular oxygen utilizing NADPH as an electron donor. Subunit of the phagocyte NADPH oxidase complex that mediates the transfer of electrons from cytosolic NADPH to O2 to produce the superoxide anion (O2(-)). In the activated complex, electrons are first transferred from NADPH to flavin adenine dinucleotide (FAD) and subsequently transferred via two heme molecules to molecular oxygen, producing superoxide through an outer-sphere reaction. Activation of the NADPH oxidase complex is initiated by the assembly of cytosolic subunits of the NADPH oxidase complex with the core NADPH oxidase complex to form a complex at the plasma membrane or phagosomal membrane. This activation process is initiated by phosphorylation dependent binding of the cytosolic NCF1/p47-phox subunit to the C-terminus of CYBA/p22-phox. Aassociates with NOX3 to form a functional NADPH oxidase constitutively generating superoxide. The polypeptide is Cytochrome b-245 light chain (Mus musculus (Mouse)).